The primary structure comprises 644 residues: Leucine-rich repeat protein soc-2 homolog (644 aa).

Positions 1 to 19 are enriched in low complexity; that stretch reads MNLCSSGATASTTSLSSTG. Disordered regions lie at residues 1–60 and 82–150; these read MNLC…APTL and NSPA…IQAD. Gly residues-rich tracts occupy residues 26–50 and 87–96; these read GVPG…GGKA and GAGGASGFTG. The span at 99–117 shows a compositional bias: polar residues; it reads QQPTGSNGHSHLHNENNAN. 20 LRR repeats span residues 164-185, 187-208, 210-231, 233-254, 256-277, 279-300, 302-323, 325-346, 348-370, 371-392, 395-416, 419-440, 443-464, 466-487, 489-510, 512-533, 535-556, 558-579, 581-603, and 605-626; these read GIKR…VKEC, HLTE…IGCL, SLRN…LQNC, QLKV…IYRL, SLTT…LRQL, NLTM…IGAL, NLTT…IGNC, NLSA…IGNL, SLVR…KNCK, SMDE…MLAS, GLTT…GPAQ, NVYS…IFSR, GLTK…IGTW, NMVE…IMNL, NLEI…IGNL, RLRI…IGLL, ELQR…IGHL, NLTH…IGSL, SLEN…LALC, and NLKY…IQAG.

It belongs to the SHOC2 family.

Acts as a Ras effector and participates in MAPK pathway activation. Probably acts as a regulatory subunit of protein phosphatase that specifically dephosphorylates Raf kinase and stimulate Raf activity at specialized signaling complexes upon Ras activation. The sequence is that of Leucine-rich repeat protein soc-2 homolog (Sur-8) from Drosophila erecta (Fruit fly).